The primary structure comprises 111 residues: Stress-response A/B barrel domain-containing protein At5g22580 (111 aa).

Positions 6-98 (FKHLVVVKFK…VIDKIVLLDF (93 aa)) constitute a Stress-response A/B barrel domain. 4 residues coordinate Mg(2+): V31, I34, D35, and V37.

Homodimer. Requires Mg(2+) as cofactor.

In terms of biological role, involved in stress response. The chain is Stress-response A/B barrel domain-containing protein At5g22580 from Arabidopsis thaliana (Mouse-ear cress).